A 25-amino-acid polypeptide reads, in one-letter code: Small ribosomal subunit protein eS32 (25 aa).

The tract at residues 1–25 is disordered; it reads MREKWKKKRSRRLRRKRRKMRARSK.

The protein belongs to the eukaryotic ribosomal protein eS32 family. In terms of assembly, component of the large ribosomal subunit.

The chain is Small ribosomal subunit protein eS32 (rpl41) from Agaricus bisporus (White button mushroom).